A 245-amino-acid chain; its full sequence is 5'-nucleotidase SurE (245 aa).

A divalent metal cation is bound by residues D8, D9, S39, and N91.

Belongs to the SurE nucleotidase family. A divalent metal cation is required as a cofactor.

It localises to the cytoplasm. It carries out the reaction a ribonucleoside 5'-phosphate + H2O = a ribonucleoside + phosphate. Functionally, nucleotidase that shows phosphatase activity on nucleoside 5'-monophosphates. This is 5'-nucleotidase SurE from Psychromonas ingrahamii (strain DSM 17664 / CCUG 51855 / 37).